We begin with the raw amino-acid sequence, 48 residues long: MAHPAQLGLQDASSPIXEELLHFHEDALMIVFLISTLVLYIITTTVST.

Residues 1–14 (MAHPAQLGLQDASS) lie on the Mitochondrial intermembrane side of the membrane. The helical transmembrane segment at 15–45 (PIXEELLHFHEDALMIVFLISTLVLYIITTT) threads the bilayer. Residues 46-48 (VST) are Mitochondrial matrix-facing.

Belongs to the cytochrome c oxidase subunit 2 family. In terms of assembly, component of the cytochrome c oxidase (complex IV, CIV), a multisubunit enzyme composed of 14 subunits. The complex is composed of a catalytic core of 3 subunits MT-CO1, MT-CO2 and MT-CO3, encoded in the mitochondrial DNA, and 11 supernumerary subunits COX4I, COX5A, COX5B, COX6A, COX6B, COX6C, COX7A, COX7B, COX7C, COX8 and NDUFA4, which are encoded in the nuclear genome. The complex exists as a monomer or a dimer and forms supercomplexes (SCs) in the inner mitochondrial membrane with NADH-ubiquinone oxidoreductase (complex I, CI) and ubiquinol-cytochrome c oxidoreductase (cytochrome b-c1 complex, complex III, CIII), resulting in different assemblies (supercomplex SCI(1)III(2)IV(1) and megacomplex MCI(2)III(2)IV(2)). Found in a complex with TMEM177, COA6, COX18, COX20, SCO1 and SCO2. Interacts with TMEM177 in a COX20-dependent manner. Interacts with COX20. Interacts with COX16. It depends on Cu cation as a cofactor.

It localises to the mitochondrion inner membrane. The catalysed reaction is 4 Fe(II)-[cytochrome c] + O2 + 8 H(+)(in) = 4 Fe(III)-[cytochrome c] + 2 H2O + 4 H(+)(out). In terms of biological role, component of the cytochrome c oxidase, the last enzyme in the mitochondrial electron transport chain which drives oxidative phosphorylation. The respiratory chain contains 3 multisubunit complexes succinate dehydrogenase (complex II, CII), ubiquinol-cytochrome c oxidoreductase (cytochrome b-c1 complex, complex III, CIII) and cytochrome c oxidase (complex IV, CIV), that cooperate to transfer electrons derived from NADH and succinate to molecular oxygen, creating an electrochemical gradient over the inner membrane that drives transmembrane transport and the ATP synthase. Cytochrome c oxidase is the component of the respiratory chain that catalyzes the reduction of oxygen to water. Electrons originating from reduced cytochrome c in the intermembrane space (IMS) are transferred via the dinuclear copper A center (CU(A)) of subunit 2 and heme A of subunit 1 to the active site in subunit 1, a binuclear center (BNC) formed by heme A3 and copper B (CU(B)). The BNC reduces molecular oxygen to 2 water molecules using 4 electrons from cytochrome c in the IMS and 4 protons from the mitochondrial matrix. In Polypterus sp. (Bichir), this protein is Cytochrome c oxidase subunit 2 (mt-co2).